Consider the following 202-residue polypeptide: Small ribosomal subunit protein uS4 (202 aa).

The 78-residue stretch at 91 to 168 folds into the S4 RNA-binding domain; it reads SRLSSVLYNS…QKVPDYLEVD (78 aa).

The protein belongs to the universal ribosomal protein uS4 family. Part of the 30S ribosomal subunit. Contacts protein S5. The interaction surface between S4 and S5 is involved in control of translational fidelity.

Its function is as follows. One of the primary rRNA binding proteins, it binds directly to 16S rRNA where it nucleates assembly of the body of the 30S subunit. With S5 and S12 plays an important role in translational accuracy. The chain is Small ribosomal subunit protein uS4 from Ehrlichia chaffeensis (strain ATCC CRL-10679 / Arkansas).